The sequence spans 508 residues: Photosystem II CP47 reaction center protein (508 aa).

6 helical membrane-spanning segments follow: residues 21–36 (SVHIMHTALVSGWAGS), 101–115 (IVFSGLCFLAAIWHW), 140–156 (GIHLFLSGVACFGFGAF), 203–218 (IAAGTLGILAGLFHLS), 237–252 (VLSSSIAAVFFAAFVV), and 457–472 (TFALLFFFGHIWHGAR).

The protein belongs to the PsbB/PsbC family. PsbB subfamily. In terms of assembly, PSII is composed of 1 copy each of membrane proteins PsbA, PsbB, PsbC, PsbD, PsbE, PsbF, PsbH, PsbI, PsbJ, PsbK, PsbL, PsbM, PsbT, PsbX, PsbY, PsbZ, Psb30/Ycf12, at least 3 peripheral proteins of the oxygen-evolving complex and a large number of cofactors. It forms dimeric complexes. The cofactor is Binds multiple chlorophylls. PSII binds additional chlorophylls, carotenoids and specific lipids..

The protein resides in the plastid. It localises to the chloroplast thylakoid membrane. One of the components of the core complex of photosystem II (PSII). It binds chlorophyll and helps catalyze the primary light-induced photochemical processes of PSII. PSII is a light-driven water:plastoquinone oxidoreductase, using light energy to abstract electrons from H(2)O, generating O(2) and a proton gradient subsequently used for ATP formation. The protein is Photosystem II CP47 reaction center protein of Calycanthus floridus var. glaucus (Eastern sweetshrub).